A 501-amino-acid chain; its full sequence is Aldehyde dehydrogenase, cytosolic 1 (501 aa).

Glycine 246–glycine 251 contributes to the NAD(+) binding site. The Proton acceptor role is filled by glutamate 269. Catalysis depends on cysteine 303, which acts as the Nucleophile.

The protein belongs to the aldehyde dehydrogenase family. As to quaternary structure, homotetramer. Eye specific, with very high expression in the lens.

It is found in the cytoplasm. It catalyses the reaction an aldehyde + NAD(+) + H2O = a carboxylate + NADH + 2 H(+). It functions in the pathway alcohol metabolism; ethanol degradation; acetate from ethanol: step 2/2. Its function is as follows. Major component of the eye of elephant shrews, which in contrast to other mammals, possesses both a lens- and a non-lens class-1 aldehyde dehydrogenase 1. This eye-specific form is a structural protein of the lens and, in other part of the eye, serves as the major form of ALDH1. Can convert/oxidize retinaldehyde to retinoic acid. In Macroscelides proboscideus (Short-eared elephant shrew), this protein is Aldehyde dehydrogenase, cytosolic 1 (ALDH1).